Consider the following 172-residue polypeptide: Adenine phosphoribosyltransferase (172 aa).

It belongs to the purine/pyrimidine phosphoribosyltransferase family. Homodimer.

It localises to the cytoplasm. The enzyme catalyses AMP + diphosphate = 5-phospho-alpha-D-ribose 1-diphosphate + adenine. Its pathway is purine metabolism; AMP biosynthesis via salvage pathway; AMP from adenine: step 1/1. Functionally, catalyzes a salvage reaction resulting in the formation of AMP, that is energically less costly than de novo synthesis. In Synechocystis sp. (strain ATCC 27184 / PCC 6803 / Kazusa), this protein is Adenine phosphoribosyltransferase.